The sequence spans 323 residues: o-succinylbenzoate synthase (323 aa).

Lysine 134 serves as the catalytic Proton donor. Positions 162, 191, and 214 each coordinate Mg(2+). Lysine 236 (proton acceptor) is an active-site residue.

Belongs to the mandelate racemase/muconate lactonizing enzyme family. MenC type 1 subfamily. It depends on a divalent metal cation as a cofactor.

The enzyme catalyses (1R,6R)-6-hydroxy-2-succinyl-cyclohexa-2,4-diene-1-carboxylate = 2-succinylbenzoate + H2O. It functions in the pathway quinol/quinone metabolism; 1,4-dihydroxy-2-naphthoate biosynthesis; 1,4-dihydroxy-2-naphthoate from chorismate: step 4/7. The protein operates within quinol/quinone metabolism; menaquinone biosynthesis. In terms of biological role, converts 2-succinyl-6-hydroxy-2,4-cyclohexadiene-1-carboxylate (SHCHC) to 2-succinylbenzoate (OSB). This chain is o-succinylbenzoate synthase, found in Edwardsiella ictaluri (strain 93-146).